The sequence spans 26 residues: Dermaseptin-J4 (26 aa).

Val26 bears the Valine amide mark.

In terms of tissue distribution, expressed by the skin glands.

The protein localises to the secreted. Its function is as follows. Has antimicrobial activity. The chain is Dermaseptin-J4 from Phasmahyla jandaia (Jandaia leaf frog).